The primary structure comprises 103 residues: Large ribosomal subunit protein bL21 (103 aa).

The protein belongs to the bacterial ribosomal protein bL21 family. Part of the 50S ribosomal subunit. Contacts protein L20.

Functionally, this protein binds to 23S rRNA in the presence of protein L20. The chain is Large ribosomal subunit protein bL21 from Ralstonia pickettii (strain 12J).